The sequence spans 77 residues: MAVKLKIKKGDSVKVITGDDKGKTGKVLAVYPKTLKVVVEGCKIAKKAIKPSEKNPNGGFINKEMPMDISNVAKVQE.

The protein belongs to the universal ribosomal protein uL24 family. As to quaternary structure, part of the 50S ribosomal subunit.

In terms of biological role, one of two assembly initiator proteins, it binds directly to the 5'-end of the 23S rRNA, where it nucleates assembly of the 50S subunit. One of the proteins that surrounds the polypeptide exit tunnel on the outside of the subunit. The sequence is that of Large ribosomal subunit protein uL24 from Campylobacter jejuni subsp. jejuni serotype O:6 (strain 81116 / NCTC 11828).